The following is a 197-amino-acid chain: dTTP/UTP pyrophosphatase (197 aa).

Catalysis depends on D70, which acts as the Proton acceptor.

It belongs to the Maf family. YhdE subfamily. A divalent metal cation is required as a cofactor.

The protein resides in the cytoplasm. The catalysed reaction is dTTP + H2O = dTMP + diphosphate + H(+). It catalyses the reaction UTP + H2O = UMP + diphosphate + H(+). In terms of biological role, nucleoside triphosphate pyrophosphatase that hydrolyzes dTTP and UTP. May have a dual role in cell division arrest and in preventing the incorporation of modified nucleotides into cellular nucleic acids. This chain is dTTP/UTP pyrophosphatase (yceF), found in Shigella dysenteriae serotype 1 (strain Sd197).